The sequence spans 482 residues: tRNA sulfurtransferase (482 aa).

The 105-residue stretch at 61-165 (LTIRDALTRI…DDRLLLIKGR (105 aa)) folds into the THUMP domain. ATP contacts are provided by residues 183-184 (LI), K265, G287, and Q296. C344 and C456 are disulfide-bonded. A Rhodanese domain is found at 404–482 (FGPNDVILDI…GFKNVKVYRP (79 aa)). C456 functions as the Cysteine persulfide intermediate in the catalytic mechanism.

Belongs to the ThiI family. As to quaternary structure, interacts with IscS.

The protein localises to the cytoplasm. The enzyme catalyses [ThiI sulfur-carrier protein]-S-sulfanyl-L-cysteine + a uridine in tRNA + 2 reduced [2Fe-2S]-[ferredoxin] + ATP + H(+) = [ThiI sulfur-carrier protein]-L-cysteine + a 4-thiouridine in tRNA + 2 oxidized [2Fe-2S]-[ferredoxin] + AMP + diphosphate. It catalyses the reaction [ThiS sulfur-carrier protein]-C-terminal Gly-Gly-AMP + S-sulfanyl-L-cysteinyl-[cysteine desulfurase] + AH2 = [ThiS sulfur-carrier protein]-C-terminal-Gly-aminoethanethioate + L-cysteinyl-[cysteine desulfurase] + A + AMP + 2 H(+). It participates in cofactor biosynthesis; thiamine diphosphate biosynthesis. Catalyzes the ATP-dependent transfer of a sulfur to tRNA to produce 4-thiouridine in position 8 of tRNAs, which functions as a near-UV photosensor. Also catalyzes the transfer of sulfur to the sulfur carrier protein ThiS, forming ThiS-thiocarboxylate. This is a step in the synthesis of thiazole, in the thiamine biosynthesis pathway. The sulfur is donated as persulfide by IscS. In Escherichia coli O157:H7, this protein is tRNA sulfurtransferase.